The following is a 355-amino-acid chain: Homeobox protein knotted-1-like LET6 (355 aa).

The interval 75-96 is disordered; it reads PFMDNNNNNNPQEDNNSSSSSI. The segment covering 79–96 has biased composition (low complexity); sequence NNNNNNPQEDNNSSSSSI. One can recognise an ELK domain in the interval 237-257; it reads ELKGQLLRKYSGYLGSLKQEF. Positions 258–321 form a DNA-binding region, homeobox; TALE-type; that stretch reads MKKRKKGKLP…NQRKRHWKPS (64 aa).

It belongs to the TALE/KNOX homeobox family. As to expression, expressed in developing lateral organs and developing ovaries in flowers.

The protein localises to the nucleus. May have a role to play in formative events in ovule and embryo morphogenesis. Probably binds to the DNA sequence 5'-TGAC-3'. This Solanum lycopersicum (Tomato) protein is Homeobox protein knotted-1-like LET6 (LET6).